Reading from the N-terminus, the 307-residue chain is Serine/threonine-protein phosphatase 4 catalytic subunit (307 aa).

The residue at position 2 (alanine 2) is an N-acetylalanine. Aspartate 54, histidine 56, aspartate 82, and asparagine 114 together coordinate Mn(2+). The active-site Proton donor is histidine 115. Residues histidine 164 and histidine 238 each contribute to the Mn(2+) site. Position 307 is a leucine methyl ester (leucine 307).

The protein belongs to the PPP phosphatase family. PP-4 (PP-X) subfamily. In terms of assembly, serine/threonine-protein phosphatase 4 (PP4) occurs in different assemblies of the catalytic and one or more regulatory subunits. Component of the PP4 complexes PPP4C-PPP4R1, PPP4C-PPP4R2, PPP4C-PPP4R2-PPP4R3A, PPP4C-PPP4R2-PPP4R3B and PPP4C-PPP4R4. The PPP4C-PPP4R2 complex appears to be a tetramer composed of 2 molecules of PPP4C and 2 molecules of PPP4R2. Interacts with REL, NFKB1/p50 and RELA. Interacts with SMN1 and GEMIN4. Interacts with IRS4 (phosphorylated). Interacts with SMEK1/PPP4R3A; the interaction requires PP4R2. Interacts with HDAC3. Mn(2+) is required as a cofactor. In terms of processing, methylation at the C-terminal Leu-307 is critical for interactions with regulatory subunits and functions in DNA repair.

It is found in the cytoplasm. The protein localises to the nucleus. It localises to the cytoskeleton. Its subcellular location is the microtubule organizing center. The protein resides in the centrosome. The catalysed reaction is O-phospho-L-seryl-[protein] + H2O = L-seryl-[protein] + phosphate. The enzyme catalyses O-phospho-L-threonyl-[protein] + H2O = L-threonyl-[protein] + phosphate. Its function is as follows. Protein phosphatase that is involved in many processes such as microtubule organization at centrosomes, maturation of spliceosomal snRNPs, apoptosis, DNA repair, tumor necrosis factor (TNF)-alpha signaling, activation of c-Jun N-terminal kinase MAPK8, regulation of histone acetylation, DNA damage checkpoint signaling, NF-kappa-B activation and cell migration. The PPP4C-PPP4R1 PP4 complex may play a role in dephosphorylation and regulation of HDAC3. The PPP4C-PPP4R2-PPP4R3A PP4 complex specifically dephosphorylates H2AX phosphorylated on Ser-140 (gamma-H2AX) generated during DNA replication and required for DNA DSB repair. Dephosphorylates NDEL1 at CDK1 phosphorylation sites and negatively regulates CDK1 activity in interphase. In response to DNA damage, catalyzes RPA2 dephosphorylation, an essential step for DNA repair since it allows the efficient RPA2-mediated recruitment of RAD51 to chromatin. In Rattus norvegicus (Rat), this protein is Serine/threonine-protein phosphatase 4 catalytic subunit (Ppp4c).